Reading from the N-terminus, the 215-residue chain is Small ribosomal subunit protein uS5 (215 aa).

The segment covering 1–12 (MSGTQRRGGGAG) has biased composition (gly residues). The segment at 1-31 (MSGTQRRGGGAGGERRGRDNRRGQNDRNRNQ) is disordered. A compositionally biased stretch (basic and acidic residues) spans 13 to 31 (GERRGRDNRRGQNDRNRNQ). One can recognise an S5 DRBM domain in the interval 34–97 (YLERVVAINR…EEAKKHFFKV (64 aa)).

This sequence belongs to the universal ribosomal protein uS5 family. In terms of assembly, part of the 30S ribosomal subunit. Contacts proteins S4 and S8.

Its function is as follows. With S4 and S12 plays an important role in translational accuracy. Functionally, located at the back of the 30S subunit body where it stabilizes the conformation of the head with respect to the body. This Cutibacterium acnes (strain DSM 16379 / KPA171202) (Propionibacterium acnes) protein is Small ribosomal subunit protein uS5.